A 29-amino-acid polypeptide reads, in one-letter code: Kalata-B4 (29 aa).

A cross-link (cyclopeptide (Gly-Asp)) is located at residues glycine 1–aspartate 29. Disulfide bonds link cysteine 5-cysteine 19, cysteine 9-cysteine 21, and cysteine 14-cysteine 26.

Post-translationally, this is a cyclic peptide.

Probably participates in a plant defense mechanism. This is Kalata-B4 from Oldenlandia affinis.